A 611-amino-acid chain; its full sequence is MASRRARQRLKGGGGGGGGGGDAGPAAEKLEQLGSREAGAEPRPESGNKAGQVWAPEGSTAFKCLLSARLCAALLSNISDCDETFNYWEPTHYLIYGKGFQTWEYSPVYAIRSYAYLLLHAWPAAFHARILQTNKILVFYFLRCLLAFVSCVCELYFYKAVCKKFGLHVSRMMLAFLVLSTGMFCSSSAFLPSSFCMYTTLIAMTGWYMDKTPIAVLGVAAGAILGWPFSAALGLPIAFDLLARKHRWKSFLLWSLVALALFLVPVVVIDSYYYGKLVVAPLNIVLYNVFTSHGPDLYGTEPWYFYLINGFLNFNVAFALALLVLPLTFLMEYLLQRFHVQNLGHPYWLTLAPMYIWFIIFFIQPHKEERFLFPVYPLICLCGAVALSALQKCYHFVFQRYRLEHYTVTSNWLALGTVFLFGLLSFSRSVALFRGYHGPLDLYPEFYRIATDPTIHTVPEGRPVNVCVGKEWYRFPSSFLLPDNWQLQFIPSEFRGQLPKPFAEGPLATRTVPTHMNDQNREEPSRYIDISKCHYLVDLDTMRETPREPNYSSHREEWVSLAHRPFLDASRSSKLLRAFYVPFLSDQYTVYVNYTILKPRKAKPSRKKSGG.

Residues 1–10 (MASRRARQRL) are compositionally biased toward basic residues. The tract at residues 1–51 (MASRRARQRLKGGGGGGGGGGDAGPAAEKLEQLGSREAGAEPRPESGNKAG) is disordered. At 1–135 (MASRRARQRL…FHARILQTNK (135 aa)) the chain is on the lumenal side. A compositionally biased stretch (gly residues) spans 11–23 (KGGGGGGGGGGDA). Asn-77 carries N-linked (GlcNAc...) asparagine glycosylation. Residues 136-156 (ILVFYFLRCLLAFVSCVCELY) traverse the membrane as a helical segment. The Cytoplasmic segment spans residues 157-171 (FYKAVCKKFGLHVSR). A helical transmembrane segment spans residues 172-192 (MMLAFLVLSTGMFCSSSAFLP). Topologically, residues 193–213 (SSFCMYTTLIAMTGWYMDKTP) are lumenal. Residues 214 to 234 (IAVLGVAAGAILGWPFSAALG) form a helical membrane-spanning segment. Residues 235-249 (LPIAFDLLARKHRWK) are Cytoplasmic-facing. Residues 250-270 (SFLLWSLVALALFLVPVVVID) traverse the membrane as a helical segment. Residues 271–310 (SYYYGKLVVAPLNIVLYNVFTSHGPDLYGTEPWYFYLING) are Lumenal-facing. Residues 311–331 (FLNFNVAFALALLVLPLTFLM) traverse the membrane as a helical segment. Residues 332 to 342 (EYLLQRFHVQN) lie on the Cytoplasmic side of the membrane. Residues 343–363 (LGHPYWLTLAPMYIWFIIFFI) traverse the membrane as a helical segment. Residues 364 to 370 (QPHKEER) lie on the Lumenal side of the membrane. The chain crosses the membrane as a helical span at residues 371–391 (FLFPVYPLICLCGAVALSALQ). Over 392-405 (KCYHFVFQRYRLEH) the chain is Cytoplasmic. Residues 406 to 426 (YTVTSNWLALGTVFLFGLLSF) traverse the membrane as a helical segment. The Lumenal segment spans residues 427-611 (SRSVALFRGY…AKPSRKKSGG (185 aa)). N-linked (GlcNAc...) asparagine glycans are attached at residues Asn-550 and Asn-593.

This sequence belongs to the glycosyltransferase 22 family.

The protein resides in the endoplasmic reticulum membrane. It carries out the reaction an alpha-D-Man-(1-&gt;2)-alpha-D-Man-(1-&gt;2)-alpha-D-Man-(1-&gt;3)-[alpha-D-Man-(1-&gt;3)-alpha-D-Man-(1-&gt;6)]-beta-D-Man-(1-&gt;4)-beta-D-GlcNAc-(1-&gt;4)-alpha-D-GlcNAc-diphospho-di-trans,poly-cis-dolichol + a di-trans,poly-cis-dolichyl beta-D-mannosyl phosphate = an alpha-D-Man-(1-&gt;2)-alpha-D-Man-(1-&gt;2)-alpha-D-Man-(1-&gt;3)-[alpha-D-Man-(1-&gt;2)-alpha-D-Man-(1-&gt;3)-alpha-D-Man-(1-&gt;6)]-beta-D-Man-(1-&gt;4)-beta-D-GlcNAc-(1-&gt;4)-alpha-D-GlcNAc-diphospho-di-trans,poly-cis-dolichol + a di-trans,poly-cis-dolichyl phosphate + H(+). The enzyme catalyses an alpha-D-Man-(1-&gt;2)-alpha-D-Man-(1-&gt;2)-alpha-D-Man-(1-&gt;3)-[alpha-D-Man-(1-&gt;2)-alpha-D-Man-(1-&gt;3)-[alpha-D-Man-(1-&gt;6)]-alpha-D-Man-(1-&gt;6)]-beta-D-Man-(1-&gt;4)-beta-D-GlcNAc-(1-&gt;4)-alpha-D-GlcNAc-diphospho-di-trans,poly-cis-dolichol + a di-trans,poly-cis-dolichyl beta-D-mannosyl phosphate = an alpha-D-Man-(1-&gt;2)-alpha-D-Man-(1-&gt;2)-alpha-D-Man-(1-&gt;3)-[alpha-D-Man-(1-&gt;2)-alpha-D-Man-(1-&gt;3)-[alpha-D-Man-(1-&gt;2)-alpha-D-Man-(1-&gt;6)]-alpha-D-Man-(1-&gt;6)]-beta-D-Man-(1-&gt;4)-beta-D-GlcNAc-(1-&gt;4)-alpha-D-GlcNAc-diphospho-di-trans,poly-cis-dolichol + a di-trans,poly-cis-dolichyl phosphate + H(+). The protein operates within protein modification; protein glycosylation. Its function is as follows. Mannosyltransferase that operates in the biosynthetic pathway of dolichol-linked oligosaccharides, the glycan precursors employed in protein asparagine (N)-glycosylation. The assembly of dolichol-linked oligosaccharides begins on the cytosolic side of the endoplasmic reticulum membrane and finishes in its lumen. The sequential addition of sugars to dolichol pyrophosphate produces dolichol-linked oligosaccharides containing fourteen sugars, including two GlcNAcs, nine mannoses and three glucoses. Once assembled, the oligosaccharide is transferred from the lipid to nascent proteins by oligosaccharyltransferases. In the lumen of the endoplasmic reticulum, catalyzes the addition of the seventh and ninth alpha-1,2-linked mannose residues to Man(6)GlcNAc(2)-PP-dolichol and Man(8)GlcNAc(2)-PP-dolichol respectively. This chain is Alpha-1,2-mannosyltransferase ALG9, found in Mus musculus (Mouse).